The chain runs to 284 residues: Acetylglutamate kinase (284 aa).

Substrate-binding positions include 64-65, Arg86, and Asn179; that span reads GG.

Belongs to the acetylglutamate kinase family. ArgB subfamily.

It is found in the cytoplasm. It carries out the reaction N-acetyl-L-glutamate + ATP = N-acetyl-L-glutamyl 5-phosphate + ADP. The protein operates within amino-acid biosynthesis; L-arginine biosynthesis; N(2)-acetyl-L-ornithine from L-glutamate: step 2/4. Catalyzes the ATP-dependent phosphorylation of N-acetyl-L-glutamate. The protein is Acetylglutamate kinase of Acaryochloris marina (strain MBIC 11017).